The following is a 776-amino-acid chain: Transcriptional regulator QRICH1 (776 aa).

Residue Met-1 is modified to N-acetylmethionine. Positions 6–48 (ENTISFEEYIRVKARSVPQHRMKEFLDSLASKGPEALQEFQQT) constitute a CARD domain. Disordered stretches follow at residues 139–164 (IQGQ…PSQL) and 218–240 (ALSP…GTAS). Phosphoserine is present on Ser-345. Glycyl lysine isopeptide (Lys-Gly) (interchain with G-Cter in SUMO2) cross-links involve residues Lys-353 and Lys-358. A compositionally biased stretch (low complexity) spans 419–429 (QQQPQQQTPQE). Residues 419 to 441 (QQQPQQQTPQEQTPPPQQQQQQL) form a disordered region. A Phosphoserine modification is found at Ser-464.

Its subcellular location is the nucleus. It is found in the cytoplasm. It localises to the cell membrane. Transcriptional regulator that acts as a mediator of the integrated stress response (ISR) through transcriptional control of protein homeostasis under conditions of ER stress. Controls the outcome of the unfolded protein response (UPR) which is an ER-stress response pathway. ER stress induces QRICH1 translation by a ribosome translation re-initiation mechanism in response to EIF2S1/eIF-2-alpha phosphorylation, and stress-induced QRICH1 regulates a transcriptional program associated with protein translation, protein secretion-mediated proteotoxicity and cell death during the terminal UPR. May cooperate with ATF4 transcription factor signaling to regulate ER homeostasis which is critical for cell viability. Up-regulates CASP3/caspase-3 activity in epithelial cells under ER stress. Central regulator of proteotoxicity associated with ER stress-mediated inflammatory diseases in the intestines and liver. Involved in chondrocyte hypertrophy, a process required for normal longitudinal bone growth. The protein is Transcriptional regulator QRICH1 of Homo sapiens (Human).